The following is a 218-amino-acid chain: PEDIGQSPGVPTPDGDKVDLEAFSEFTKIITPAITRVVDFAKKLPMFSELPCEDQIILLKGCCMEIMSLRAAVRYDPESETLTLSGEMAVKREQLKNGGLGVVSDAIFDLGKSLAQFNLDDSEVALLQAVLLMSSDRSGLTSVDKIEKCQETYLLAFEHYINHRKHNIPHFWPKLLMKVTDLRMIGACHASRFLHMKVECPNELFPPLFLEVFEDQEV.

The region spanning Pro-1–Asp-215 is the NR LBD domain. 3,3',5-triiodo-L-thyronine is bound by residues Arg-36 and Ser-85.

It belongs to the nuclear hormone receptor family. NR1 subfamily.

The protein localises to the nucleus. Nuclear hormone receptor that can act as a repressor or activator of transcription. High affinity receptor for thyroid hormones, including triiodothyronine and thyroxine. This Oncorhynchus mykiss (Rainbow trout) protein is Thyroid hormone receptor alpha (thra).